The chain runs to 1072 residues: Integrin alpha-6 (1072 aa).

The signal sequence occupies residues 1–18 (MAAALLLYLPLLPGLAGA). At 19 to 1010 (FNLDAENVIG…FPAKPVALYT (992 aa)) the chain is on the extracellular side. 7 FG-GAP repeats span residues 23 to 88 (AENV…DTRC), 94 to 160 (DEDT…IKDD), 170 to 223 (DGRL…FYDL), 238 to 295 (RQDK…QRAL), 296 to 357 (SLEH…KWEG), 358 to 413 (IKPI…GINT), and 414 to 476 (EPAQ…VQPD). Asn71 carries N-linked (GlcNAc...) asparagine glycosylation. 3 disulfides stabilise this stretch: Cys79/Cys88, Cys125/Cys148, and Cys169/Cys182. Residues Asn217 and Asn278 are each glycosylated (N-linked (GlcNAc...) asparagine). Ca(2+) is bound by residues Asp318, Asn320, Asp322, and Asp326. Residue Asn364 is glycosylated (N-linked (GlcNAc...) asparagine). Residues Asp380, Asn382, Asp384, Tyr386, Asp388, Asp438, Asp440, Asn442, Tyr444, and Asp446 each contribute to the Ca(2+) site. Cysteines 498 and 557 form a disulfide. Asn515 and Asn609 each carry an N-linked (GlcNAc...) asparagine glycan. 2 disulfides stabilise this stretch: Cys625–Cys631 and Cys725–Cys736. Asn730, Asn747, and Asn780 each carry an N-linked (GlcNAc...) asparagine glycan. Intrachain disulfides connect Cys880-Cys927 and Cys933-Cys938. N-linked (GlcNAc...) asparagine glycosylation occurs at Asn957. Residues 1011–1036 (GVPWWIIAVAIFAGVLMLALLVFLLW) traverse the membrane as a helical segment. Residues 1037-1072 (KCGFFKRSKKDHYDATYHKAEIHAQPSDKERLTSDA) are Cytoplasmic-facing. Residue Cys1038 is the site of S-palmitoyl cysteine; by DHHC3 attachment. The GFFKR motif motif lies at 1039-1043 (GFFKR). Ser1070 is subject to Phosphoserine; by CaMK2.

It belongs to the integrin alpha chain family. Heterodimer of an alpha and a beta subunit. The alpha subunit is composed of a heavy and a light chain linked by a disulfide bond. Alpha-6 associates with either beta-1 (ITGB1) or beta-4 (ITGB4) to form ITGA6:ITGB1 and ITGA6:ITGB4, respectively. In terms of processing, phosphorylated in vivo.

It localises to the cell membrane. Its function is as follows. Integrin alpha-6/beta-1 (ITGA6:ITGB1) is a receptor for laminin on platelets. Integrin alpha-6/beta-1 (ITGA6:ITGB1) is present in oocytes and is involved in sperm-egg fusion. Integrin alpha-6/beta-4 (ITGA6:ITGB4) is a receptor for laminin in epithelial cells and it plays a critical structural role in the hemidesmosome. The polypeptide is Integrin alpha-6 (ITGA6) (Gallus gallus (Chicken)).